Here is a 922-residue protein sequence, read N- to C-terminus: Isoleucine--tRNA ligase (922 aa).

Residues 57–67 (PYANGDIHMGH) carry the 'HIGH' region motif. Glu553 contacts L-isoleucyl-5'-AMP. Positions 594–598 (KMSKS) match the 'KMSKS' region motif. Lys597 provides a ligand contact to ATP. The Zn(2+) site is built by Cys889, Cys892, Cys909, and Cys912.

The protein belongs to the class-I aminoacyl-tRNA synthetase family. IleS type 1 subfamily. Monomer. The cofactor is Zn(2+).

The protein resides in the cytoplasm. It carries out the reaction tRNA(Ile) + L-isoleucine + ATP = L-isoleucyl-tRNA(Ile) + AMP + diphosphate. Catalyzes the attachment of isoleucine to tRNA(Ile). As IleRS can inadvertently accommodate and process structurally similar amino acids such as valine, to avoid such errors it has two additional distinct tRNA(Ile)-dependent editing activities. One activity is designated as 'pretransfer' editing and involves the hydrolysis of activated Val-AMP. The other activity is designated 'posttransfer' editing and involves deacylation of mischarged Val-tRNA(Ile). The protein is Isoleucine--tRNA ligase of Bacillus licheniformis (strain ATCC 14580 / DSM 13 / JCM 2505 / CCUG 7422 / NBRC 12200 / NCIMB 9375 / NCTC 10341 / NRRL NRS-1264 / Gibson 46).